The chain runs to 257 residues: Kallikrein-1 (257 aa).

The first 18 residues, 1-18 (MWFLVLCLALSLGGTGRA), serve as a signal peptide directing secretion. A propeptide spans 19–24 (PPIQSR) (activation peptide). A Peptidase S1 domain is found at 25-254 (IVGGWECSQP…YVKWIEDTIA (230 aa)). Disulfide bonds link Cys-31-Cys-169, Cys-47-Cys-63, Cys-148-Cys-215, Cys-180-Cys-194, and Cys-205-Cys-230. Residue His-62 is the Charge relay system of the active site. A glycan (O-linked (GalNAc...) serine) is linked at Ser-90. A glycan (N-linked (GlcNAc...) asparagine) is linked at Asn-99. Ser-101 carries O-linked (GalNAc...) serine glycosylation. Residue Asn-105 is glycosylated (N-linked (GlcNAc...) asparagine). Asp-116 functions as the Charge relay system in the catalytic mechanism. A glycan (N-linked (GlcNAc...) asparagine) is linked at Asn-160. An O-linked (GalNAc...) serine glycan is attached at Ser-162. The active-site Charge relay system is Ser-209.

This sequence belongs to the peptidase S1 family. Kallikrein subfamily.

The enzyme catalyses Preferential cleavage of Arg-|-Xaa bonds in small molecule substrates. Highly selective action to release kallidin (lysyl-bradykinin) from kininogen involves hydrolysis of Met-|-Xaa or Leu-|-Xaa.. Functionally, glandular kallikreins cleave Met-Lys and Arg-Ser bonds in kininogen to release Lys-bradykinin. This Macaca fascicularis (Crab-eating macaque) protein is Kallikrein-1 (KLK1).